We begin with the raw amino-acid sequence, 341 residues long: 2-keto-4-carboxy-3-hexenedioate hydratase (341 aa).

Zn(2+) is bound by residues His-8 and His-10. Substrate is bound at residue 71 to 73; it reads RAS. His-178 contributes to the Zn(2+) binding site. Substrate-binding residues include Tyr-194 and His-223. Residue Glu-284 is the Proton donor/acceptor of the active site. Substrate is bound at residue Arg-290.

Belongs to the metallo-dependent hydrolases superfamily. In terms of assembly, homodimer. Zn(2+) serves as cofactor.

The enzyme catalyses (3Z)-2-oxo-4-carboxy-3-hexenedioate + H2O = (2S)-2-hydroxy-4-oxobutane-1,2,4-tricarboxylate. The protein operates within secondary metabolite metabolism; lignin degradation. Functionally, contributes to the degradation of lignin at the level of the protocatechuate 4,5-cleavage pathway. Catalyzes the hydration of the double bond of (3Z)-2-keto-4-carboxy-3-hexenedioate (KCH) to (4S)-4-carboxy-4-hydroxy-2-oxoadipate (CHA, also named (2S)-2-hydroxy-4-oxobutane-1,2,4-tricarboxylate). Is involved in the catabolism of both vanillate and syringate. This is 2-keto-4-carboxy-3-hexenedioate hydratase from Sphingobium sp. (strain NBRC 103272 / SYK-6).